The primary structure comprises 337 residues: Anthranilate phosphoribosyltransferase (337 aa).

5-phospho-alpha-D-ribose 1-diphosphate contacts are provided by residues glycine 81, 84 to 85, serine 89, 91 to 94, 109 to 117, and alanine 121; these read GD, NVST, and KHGNRAASS. Glycine 81 serves as a coordination point for anthranilate. Serine 93 contacts Mg(2+). Asparagine 112 is a binding site for anthranilate. Arginine 167 is an anthranilate binding site. The Mg(2+) site is built by aspartate 226 and glutamate 227.

This sequence belongs to the anthranilate phosphoribosyltransferase family. As to quaternary structure, homodimer. Requires Mg(2+) as cofactor.

The enzyme catalyses N-(5-phospho-beta-D-ribosyl)anthranilate + diphosphate = 5-phospho-alpha-D-ribose 1-diphosphate + anthranilate. It functions in the pathway amino-acid biosynthesis; L-tryptophan biosynthesis; L-tryptophan from chorismate: step 2/5. Its function is as follows. Catalyzes the transfer of the phosphoribosyl group of 5-phosphorylribose-1-pyrophosphate (PRPP) to anthranilate to yield N-(5'-phosphoribosyl)-anthranilate (PRA). This is Anthranilate phosphoribosyltransferase from Methylobacterium sp. (strain 4-46).